A 127-amino-acid chain; its full sequence is Phosphoribosyl-AMP cyclohydrolase (127 aa).

A Mg(2+)-binding site is contributed by D75. Position 76 (C76) interacts with Zn(2+). Residues D77 and D79 each coordinate Mg(2+). Zn(2+) is bound by residues C93 and C100.

It belongs to the PRA-CH family. As to quaternary structure, homodimer. Mg(2+) serves as cofactor. Requires Zn(2+) as cofactor.

It is found in the cytoplasm. The catalysed reaction is 1-(5-phospho-beta-D-ribosyl)-5'-AMP + H2O = 1-(5-phospho-beta-D-ribosyl)-5-[(5-phospho-beta-D-ribosylamino)methylideneamino]imidazole-4-carboxamide. Its pathway is amino-acid biosynthesis; L-histidine biosynthesis; L-histidine from 5-phospho-alpha-D-ribose 1-diphosphate: step 3/9. Functionally, catalyzes the hydrolysis of the adenine ring of phosphoribosyl-AMP. In Desulfotalea psychrophila (strain LSv54 / DSM 12343), this protein is Phosphoribosyl-AMP cyclohydrolase.